An 83-amino-acid chain; its full sequence is Apolipoprotein C-I, basic form (83 aa).

The N-terminal stretch at 1–26 (MRLFLSLPVLVVVLSMVLEGPAPAQG) is a signal peptide.

The protein belongs to the apolipoprotein C1 family.

It localises to the secreted. In terms of biological role, inhibitor of lipoprotein binding to the low density lipoprotein (LDL) receptor, LDL receptor-related protein, and very low density lipoprotein (VLDL) receptor. Associates with high density lipoproteins (HDL) and the triacylglycerol-rich lipoproteins in the plasma and makes up about 10% of the protein of the VLDL and 2% of that of HDL. Appears to interfere directly with fatty acid uptake and is also the major plasma inhibitor of cholesteryl ester transfer protein (CETP). Binds free fatty acids and reduces their intracellular esterification. Modulates the interaction of APOE with beta-migrating VLDL and inhibits binding of beta-VLDL to the LDL receptor-related protein. This Colobus guereza (Mantled guereza) protein is Apolipoprotein C-I, basic form (APOC1B).